Consider the following 1396-residue polypeptide: DNA-directed RNA polymerase subunit beta' (1396 aa).

The Zn(2+) site is built by Cys-70, Cys-72, Cys-85, and Cys-88. The Mg(2+) site is built by Asp-460, Asp-462, and Asp-464. Zn(2+)-binding residues include Cys-814, Cys-889, Cys-896, and Cys-899.

It belongs to the RNA polymerase beta' chain family. As to quaternary structure, the RNAP catalytic core consists of 2 alpha, 1 beta, 1 beta' and 1 omega subunit. When a sigma factor is associated with the core the holoenzyme is formed, which can initiate transcription. Requires Mg(2+) as cofactor. It depends on Zn(2+) as a cofactor.

It carries out the reaction RNA(n) + a ribonucleoside 5'-triphosphate = RNA(n+1) + diphosphate. DNA-dependent RNA polymerase catalyzes the transcription of DNA into RNA using the four ribonucleoside triphosphates as substrates. The polypeptide is DNA-directed RNA polymerase subunit beta' (Hahella chejuensis (strain KCTC 2396)).